The following is a 495-amino-acid chain: Cyclic GMP-AMP synthase (495 aa).

Residues 1–128 (MAARRGKSTR…AGATELAAPA (128 aa)) are disordered. Residues 1–134 (MAARRGKSTR…AAPARMEAPP (134 aa)) form a DNA-binding region. K7 is subject to N6-acetyllysine. Position 13 is a phosphoserine (S13). Basic and acidic residues-rich tracts occupy residues 52–76 (CRRE…RAED) and 105–116 (RAREARSARELR). K56 is subject to N6-acetyllysine. S57 is subject to Phosphoserine. A required for association with the cell membrane region spans residues 57–68 (SGPDPREKPQVR). The segment at 103–134 (SCRAREARSARELRPQAGATELAAPARMEAPP) is required for activation upon DNA viral infection. The Nuclear export signal signature appears at 143–148 (LEKVRL). K145 is modified (N6-lactoyllysine). A DNA-binding region spans residues 147 to 190 (RLSRHEISEAAEVVNWVVEHLLRRLQGGESEFKGVALLRTGSYY). E165 is subject to PolyADP-ribosyl glutamic acid. T186 contributes to the GTP binding site. Residue S188 is modified to Phosphoserine. S188 lines the ATP pocket. Residue Y190 is modified to Phosphotyrosine. The Mg(2+) site is built by E200 and D202. Position 202 (D202) interacts with 2',3'-cGAMP. K206 participates in a covalent cross-link: Glycyl lysine isopeptide (Lys-Gly) (interchain with G-Cter in SUMO). K260 is covalently cross-linked (Glycyl lysine isopeptide (Lys-Gly) (interchain with G-Cter in ubiquitin)). At E261 the chain carries 5-glutamyl polyglutamate. The Nuclear localization signal signature appears at 268–278 (GVTVERKRRGS). The residue at position 278 (S278) is a Phosphoserine. D294 lines the GTP pocket. Residue D294 coordinates Mg(2+). D294 is a 2',3'-cGAMP binding site. The segment at 316–357 (SQWLGAKVKNNLKRQPFYLVPKHAKEGSGFQEETWRLSFSHI) is interaction with collided ribosomes. A Glycyl lysine isopeptide (Lys-Gly) (interchain with G-Cter in SUMO); alternate cross-link involves residue K322. K322 participates in a covalent cross-link: Glycyl lysine isopeptide (Lys-Gly) (interchain with G-Cter in ubiquitin); alternate. 2',3'-cGAMP is bound by residues K337 and R351. 351–358 (RLSFSHIE) provides a ligand contact to GTP. An ATP-binding site is contributed by E358. K359 carries the post-translational modification N6-acetyllysine. Residue K359 forms a Glycyl lysine isopeptide (Lys-Gly) (interchain with G-Cter in SUMO); alternate linkage. K359 participates in a covalent cross-link: Glycyl lysine isopeptide (Lys-Gly) (interchain with G-Cter in ubiquitin); alternate. The segment at 359-382 (KDILKNHGQSKTCCEIDGVKCCRK) is DNA-binding. A Zn(2+)-binding site is contributed by H365. K369 is subject to N6-acetyllysine. K369 participates in a covalent cross-link: Glycyl lysine isopeptide (Lys-Gly) (interchain with G-Cter in SUMO). Residues C371, C372, and C379 each contribute to the Zn(2+) site. Residues C379 and C380 are each lipidated (S-palmitoyl cysteine). Residues K386, K389, K396, and K397 each participate in a glycyl lysine isopeptide (Lys-Gly) (interchain with G-Cter in ubiquitin) cross-link. K389 carries the post-translational modification N6-acetyllysine. K389 contacts ATP. The residue at position 410 (S410) is a Phosphoserine. Residue 410–414 (SYHVK) coordinates ATP. A lipid anchor (S-palmitoyl cysteine) is attached at C449. The residue at position 481 (K481) is an N6-methyllysine.

It belongs to the mab-21 family. In terms of assembly, monomer in the absence of DNA. Homodimer in presence of dsDNA: forms a 2:2 dimer with two enzymes binding to two DNA molecules. Interacts with nucleosomes; interaction is mainly mediated via histones H2A and H2B and inactivates the nucleotidyltransferase activity by blocking DNA-binding and subsequent activation. Interacts with PQBP1 (via WW domain). Interacts with TRIM14; this interaction recruits USP14, leading to deubiquitinate and stabilize CGAS and promote type I interferon production. Interacts with ZCCHC3; promoting sensing of dsDNA by CGAS. Interacts (when not monomethylated) with (poly-ADP-ribosylated) PARP1; interaction takes place in the nucleus and prevents the formation of the PARP1-TIMELESS complex. Interacts (when monomethylated) with SGF29; interaction with SGF29 prevents interaction with PARP1. Interacts with PCBP2; preventing the formation of liquid-like droplets in which CGAS is activated. Interacts with IRGM; promoting CGAS degradation. Mg(2+) serves as cofactor. It depends on Mn(2+) as a cofactor. Requires Zn(2+) as cofactor. Post-translationally, the N-terminal disordered part (1-134) is phosphorylated by AURKB during the G2-M transition, blocking CGAS liquid phase separation and preventing activation. Phosphorylation at Tyr-190 by BLK promotes cytosolic retention. Localizes into the nucleus following dephosphorylation at Tyr-190. Phosphorylation at Ser-410 activates the nucleotidyltransferase activity. Dephosphorylation at Ser-410 by PPP6C impairs its ability to bind GTP, thereby inactivating it. Phosphorylation at Ser-188 by PRKDC inhibits its cyclic GMP-AMP synthase activity by impairing homodimerization and activation. Phosphorylation at Ser-278 by AKT (AKT1, AKT2 or AKT3) suppresses the nucleotidyltransferase activity. Phosphorylation at Ser-278 by CDK1 during mitosis leads to its inhibition, thereby preventing CGAS activation by self-DNA during mitosis. Dephosphorylated at Ser-278 by protein phosphatase PP1 upon mitotic exit. Ubiquitinated at Lys-389 via 'Lys-48'-linked polyubiquitin chains, leading to its SQSTM1-mediated autophagic degradation. Interaction with TRIM14 promotes recruitment of USP14, leading to deubiquitinate Lys-389 and stabilize CGAS. Ubiquitinated at Lys-359 by RNF185 via 'Lys-27'-linked polyubiquitination, promoting CGAS cyclic GMP-AMP synthase activity. Monoubiquitination at Lys-322 by TRIM56 promotes oligomerization and subsequent activation. Monoubiquitination by TRIM41 promotes CGAS activation. Ubiquitination at Lys-260 via 'Lys-48'-linked polyubiquitination promotes its degradation. Deubiquitination at Lys-260 by USP29 promotes its stabilization. Deubiquitinated by USP27X, promoting its stabilization. Ubiquitinated at Lys-386 via 'Lys-63'-linked polyubiquitin chains by MARCHF8, leading to the inhibition of its DNA binding ability. In cycling cells, nucleosome-bound CGAS is ubiquitinated at Lys-396 and Lys-397 via 'Lys-48'-linked polyubiquitin chains by the ECS(SPSB3) complex, leading to its degradation: ubiquitination and degradation of nuclear CGAS during G1 and G2 phases is required to promote low intranuclear CGAS abundance before the next mitotic cycle. In terms of processing, sumoylated at Lys-206 by TRIM38 in uninfected cells and during the early phase of viral infection, promoting its stability by preventing ubiquitination at Lys-260 and subsequent degradation. Desumoylated by SENP2 during the late phase of viral infection. Sumoylation at Lys-322, Lys-359 and Lys-369 prevents DNA-binding, oligomerization and nucleotidyltransferase activity. Desumoylation at Lys-322, Lys-359 and Lys-369 by SENP7 relieves inhibition and activates CGAS. Post-translationally, polyglutamylated by TTLL6 at Glu-261, leading to impair DNA-binding activity. Deglutamylated by AGBL5/CCP5 and AGBL6/CCP6. Acetylation at Lys-359, Lys-369 and Lys-389 inhibits the cyclic GMP-AMP synthase activity. Deacetylated upon cytosolic DNA challenge such as viral infections. Acetylation by KAT5 increases the cyclic GMP-AMP synthase activity by promoting DNA-binding and subsequent activation. In terms of processing, proteolytically cleaved by apoptotic caspases during apoptosis, leading to its inactivation. The damage of the nucleus and the mitochondria during apoptosis leads to leakage of nuclear and mitochondrial DNA, which activate CGAS: cleavage and inactivation during apoptosis in required to prevent cytokine overproduction. Cleaved by CASP7 and CASP3 during virus-induced apoptosis, thereby inactivating it and preventing cytokine overproduction. Cleaved by CASP1 upon DNA virus infection; the cleavage impairs cGAMP production. Also cleaved by the pyroptotic CASP4 during non-canonical inflammasome activation; does not cut at the same sites than CASP1. Post-translationally, degraded via selective autophagy following interaction with IRGM. IRGM promotes CGAS recruitment to autophagosome membranes, promoting its SQSTM1/p62-dependent autophagic degradation. Poly-ADP-ribosylation at Glu-165 by PARP1 impairs DNA-binding, thereby preventing the cyclic GMP-AMP synthase activity. In terms of processing, palmitoylation at Cys-449 by ZDHHC18 impairs DNA-binding, thereby preventing the cyclic GMP-AMP synthase activity. Palmitoylation at Cys-379 and Cys-380 by ZDHHC9 promotes homodimerization and cyclic GMP-AMP synthase activity. Depalmitoylation at Cys-379 and Cys-380 by LYPLAL1 impairs homodimerization and cyclic GMP-AMP synthase activity. Post-translationally, monomethylated at Lys-481 by SETD7. Monomethylation promotes interaction with SGF29, preventing interaction between PARP1 nad SGF29. Demethylation by RIOX1 promotes interaction with PARP1, followed by PARP1 inactivation. Lactylation by AARS2 prevents ability to undergo liquid-liquid phase separation (LLPS), thereby inhibiting CGAS activation.

Its subcellular location is the nucleus. It localises to the chromosome. The protein localises to the cell membrane. The protein resides in the cytoplasm. It is found in the cytosol. It catalyses the reaction GTP + ATP = 2',3'-cGAMP + 2 diphosphate. The enzyme catalyses GTP + ATP = pppGp(2'-5')A + diphosphate. The catalysed reaction is pppGp(2'-5')A = 2',3'-cGAMP + diphosphate. Its activity is regulated as follows. The enzyme activity is strongly increased by double-stranded DNA (dsDNA), but not by single-stranded DNA or RNA. DNA-binding induces the formation of liquid-like droplets in which CGAS is activated. Liquid-like droplets also create a selective environment that restricts entry of negative regulators, such as TREX1 or BANF1/BAF, allowing sensing of DNA. A number of mechanisms exist to restrict its activity toward self-DNA. The nucleotidyltransferase activity is inhibited in the nucleus via its association with nucleosomes: interacts with the acidic patch of histones H2A and H2B, thereby blocking DNA-binding and subsequent activation. CGAS is also inactive when associated with mitotic chromatin. Chromatin-bound CGAS cannot be activated by exogenous DNA in mitotic cells: phosphorylation of the N-terminal disordered part by AURKB during the G2-M transition blocks CGAS liquid phase separation and activation. Activity toward self-DNA is inhibited by BANF1/BAF upon acute loss of nuclear membrane integrity: BANF1/BAF acts by outcompeting CGAS for DNA-binding, thereby preventing CGAS activation. DNA-induced activation at micronuclei is also limited by TREX1, which degrades micronuclear DNA upon nuclear envelope rupture, thereby preventing CGAS activation. CGAS can be released from nucleosomes and activated by MRE11 component of the MRN complex, which displaces CGAS from acidic-patch-mediated sequestration. Acetylation at Lys-359, Lys-369 and Lys-389 inhibits the cyclic GMP-AMP synthase activity. Acetylation by KAT5 increases the cyclic GMP-AMP synthase activity by promoting DNA-binding and subsequent activation. Phosphorylation at Ser-278 suppresses the nucleotidyltransferase activity. Phosphorylation at Ser-410 promotes the cyclic GMP-AMP synthase activity. Phosphorylation at Ser-188 inhibits its cyclic GMP-AMP synthase activity. Ubiquitination at Lys-359 via 'Lys-27'-linked polyubiquitination enhances the cyclic GMP-AMP synthase activity. Monoubiquitination at Lys-322 promotes oligomerization and subsequent activation. Sumoylation at Lys-322, Lys-359 and Lys-369 prevents DNA-binding, oligomerization and nucleotidyltransferase activity. The enzyme activity is impaired by the cleavage by CASP1. In addition to DNA, also activated by collided ribosomes upon translation stress: specifically binds collided ribosomes, promoting its activation and triggering type-I interferon production. Its function is as follows. Nucleotidyltransferase that catalyzes the formation of cyclic GMP-AMP (2',3'-cGAMP) from ATP and GTP and plays a key role in innate immunity. Catalysis involves both the formation of a 2',5' phosphodiester linkage at the GpA step and the formation of a 3',5' phosphodiester linkage at the ApG step, producing c[G(2',5')pA(3',5')p]. Acts as a key DNA sensor: directly binds double-stranded DNA (dsDNA), inducing the formation of liquid-like droplets in which CGAS is activated, leading to synthesis of 2',3'-cGAMP, a second messenger that binds to and activates STING1, thereby triggering type-I interferon production. Preferentially binds long dsDNA (around 45 bp) and forms ladder-like networks that function cooperatively to stabilize individual cGAS-dsDNA complexes. Acts as a key foreign DNA sensor, the presence of double-stranded DNA (dsDNA) in the cytoplasm being a danger signal that triggers the immune responses. Has antiviral activity by sensing the presence of dsDNA from DNA viruses in the cytoplasm. Also acts as an innate immune sensor of infection by retroviruses by detecting the presence of reverse-transcribed DNA in the cytosol. Detection of retroviral reverse-transcribed DNA in the cytosol may be indirect and be mediated via interaction with PQBP1, which directly binds reverse-transcribed retroviral DNA. Also detects the presence of DNA from bacteria. 2',3'-cGAMP can be transferred from producing cells to neighboring cells through gap junctions, leading to promote STING1 activation and convey immune response to connecting cells. 2',3'-cGAMP can also be transferred between cells by virtue of packaging within viral particles contributing to IFN-induction in newly infected cells in a cGAS-independent but STING1-dependent manner. Also senses the presence of neutrophil extracellular traps (NETs) that are translocated to the cytosol following phagocytosis, leading to synthesis of 2',3'-cGAMP. In addition to foreign DNA, can also be activated by endogenous nuclear or mitochondrial DNA. When self-DNA leaks into the cytosol during cellular stress (such as mitochondrial stress, DNA damage, mitotic arrest or senescence), or is present in form of cytosolic micronuclei, CGAS is activated leading to a state of sterile inflammation. Acts as a regulator of cellular senescence by binding to cytosolic chromatin fragments that are present in senescent cells, leading to trigger type-I interferon production via STING1 and promote cellular senescence. Also involved in the inflammatory response to genome instability and double-stranded DNA breaks: acts by localizing to micronuclei arising from genome instability. Micronuclei, which are frequently found in cancer cells, consist of chromatin surrounded by their own nuclear membrane: following breakdown of the micronuclear envelope, a process associated with chromothripsis, CGAS binds self-DNA exposed to the cytosol, leading to 2',3'-cGAMP synthesis and subsequent activation of STING1 and type-I interferon production. In a healthy cell, CGAS is however kept inactive even in cellular events that directly expose it to self-DNA, such as mitosis, when cGAS associates with chromatin directly after nuclear envelope breakdown or remains in the form of postmitotic persistent nuclear cGAS pools bound to chromatin. Nuclear CGAS is inactivated by chromatin via direct interaction with nucleosomes, which block CGAS from DNA binding and thus prevent CGAS-induced autoimmunity. Also acts as a suppressor of DNA repair in response to DNA damage: inhibits homologous recombination repair by interacting with PARP1, the CGAS-PARP1 interaction leading to impede the formation of the PARP1-TIMELESS complex. In addition to DNA, also sense translation stress: in response to translation stress, translocates to the cytosol and associates with collided ribosomes, promoting its activation and triggering type-I interferon production. This Sus scrofa (Pig) protein is Cyclic GMP-AMP synthase.